The following is a 244-amino-acid chain: Membrane-spanning 4-domains subfamily A member 6B (244 aa).

Residues 1-46 are Cytoplasmic-facing; it reads MIPQVVTSETVAMISPNGMSLPQTDKPQPFHQWQDSLKKHLKAEIK. Residues 47–67 form a helical membrane-spanning segment; it reads VMAAIQIMCAVMVLSLGIILA. Residues 68–84 are Extracellular-facing; the sequence is SVPSNLHFTSVFSVLLK. A helical membrane pass occupies residues 85-105; that stretch reads SGYPFIGALFFIVSGILSIVT. Residues 106-121 lie on the Cytoplasmic side of the membrane; sequence ETKSTKILVDSSLTLN. A helical membrane pass occupies residues 122–142; that stretch reads ILSVSFAFMGIIIISVSLAGL. Residues 143–176 lie on the Extracellular side of the membrane; it reads HPASEQCLQSKELRPTEYHYYQFLDRNECFAAKS. The chain crosses the membrane as a helical span at residues 177-197; it reads VLAGVFSLMLISTMLELGLAV. Over 198–244 the chain is Cytoplasmic; sequence LTAMLWWKQSHSNIPGNVMFLPHSSNNDSNMESKVLCNPSYEEQLVC.

Belongs to the MS4A family. In terms of tissue distribution, expressed at high levels in thymus, spleen, and peripheral lymph nodes, with less abundant levels in non-lymphoid tissues.

The protein localises to the membrane. Functionally, may be involved in signal transduction as a component of a multimeric receptor complex. This is Membrane-spanning 4-domains subfamily A member 6B (Ms4a6b) from Mus musculus (Mouse).